Here is a 252-residue protein sequence, read N- to C-terminus: Adenylate kinase (252 aa).

Position 47–52 (47–52 (GSGKGT)) interacts with ATP. Residues 67-96 (ATGDMLRSQVKQGTPLGLEAKKIMDQGGLV) are NMP. Residues T68, R73, 94–96 (GLV), 123–126 (GFPR), and Q130 each bind AMP. Positions 164–201 (GRLVHPASGRSYHKIFSPPKKEMTDDITGEPLVQRSDD) are LID. Residues R165 and 174-175 (SY) contribute to the ATP site. Positions 198 and 209 each coordinate AMP. Q237 serves as a coordination point for ATP.

This sequence belongs to the adenylate kinase family. AK2 subfamily. As to quaternary structure, monomer.

Its subcellular location is the cytoplasm. The protein resides in the cytosol. It is found in the mitochondrion intermembrane space. The enzyme catalyses AMP + ATP = 2 ADP. In terms of biological role, catalyzes the reversible transfer of the terminal phosphate group between ATP and AMP. Plays an important role in cellular energy homeostasis and in adenine nucleotide metabolism. Adenylate kinase activity is critical for regulation of the phosphate utilization and the AMP de novo biosynthesis pathways. The polypeptide is Adenylate kinase (Lodderomyces elongisporus (strain ATCC 11503 / CBS 2605 / JCM 1781 / NBRC 1676 / NRRL YB-4239) (Yeast)).